Reading from the N-terminus, the 117-residue chain is Large ribosomal subunit protein bL19 (117 aa).

The protein belongs to the bacterial ribosomal protein bL19 family.

Its function is as follows. This protein is located at the 30S-50S ribosomal subunit interface and may play a role in the structure and function of the aminoacyl-tRNA binding site. The chain is Large ribosomal subunit protein bL19 from Desulfosudis oleivorans (strain DSM 6200 / JCM 39069 / Hxd3) (Desulfococcus oleovorans).